A 142-amino-acid chain; its full sequence is Large ribosomal subunit protein uL13 (142 aa).

Belongs to the universal ribosomal protein uL13 family. In terms of assembly, part of the 50S ribosomal subunit.

In terms of biological role, this protein is one of the early assembly proteins of the 50S ribosomal subunit, although it is not seen to bind rRNA by itself. It is important during the early stages of 50S assembly. This is Large ribosomal subunit protein uL13 from Sodalis glossinidius (strain morsitans).